We begin with the raw amino-acid sequence, 533 residues long: Probable protein kinase UbiB (533 aa).

A helical membrane pass occupies residues 24-44; it reads LILELPMLPWWLRLLGATLPW. One can recognise a Protein kinase domain in the interval 126-494; sequence RFEREPLASA…WKGSRHDWLG (369 aa). ATP contacts are provided by residues 132–140 and Lys154; that span reads LASASVAQV. Asp289 functions as the Proton acceptor in the catalytic mechanism. A helical transmembrane segment spans residues 510-530; sequence LGQQLEAWPAWVMLAGGVFLI.

This sequence belongs to the ABC1 family. UbiB subfamily.

The protein resides in the cell inner membrane. It participates in cofactor biosynthesis; ubiquinone biosynthesis [regulation]. Its function is as follows. Is probably a protein kinase regulator of UbiI activity which is involved in aerobic coenzyme Q (ubiquinone) biosynthesis. The chain is Probable protein kinase UbiB from Pseudomonas aeruginosa (strain UCBPP-PA14).